A 180-amino-acid chain; its full sequence is CD-NTase/cGAS isopeptidase (180 aa).

The region spanning isoleucine 33–valine 165 is the MPN domain. The active-site Proton donor/acceptor is glutamate 54. Zn(2+) is bound by residues histidine 115, histidine 117, and aspartate 128.

This sequence belongs to the peptidase M67B family. Cap3 isopeptidase subfamily.

Its function is as follows. Metalloprotease priming reversal component of a CBASS antivirus system. CBASS (cyclic oligonucleotide-based antiphage signaling system) provides immunity against bacteriophages. The CD-NTase protein (CdnD) synthesizes cyclic nucleotides in response to infection; these serve as specific second messenger signals. The signals activate a diverse range of effectors, leading to bacterial cell death and thus abortive phage infection. A type II-C(AAG) CBASS system. In terms of biological role, reverses the primed state of DncV, the CD-NTase. Cleaves a CdnD-GFP (green fluorescent protein) fusion protein precisely at the C-terminus of CdnD. Overexpression decreases the efficacy of CBASS protection against phage T2. Antagonism of phage defense upon overexpression is CBASS-system specific, Cap3 from this bacteria only antagonizes its cognate CBASS system and not that of C.freundii, E.coli or V.cholerae. Functionally, protects E.coli against phage T2 infection. When the cdnD-cap2-cap3-cap4 operon is introduced in E.coli there is a more than 10(3) decrease in the efficiency of T2 plaque formation. The operon does not protect against phage T5 and only about 10-fold against T7. In Enterobacter hormaechei subsp. hoffmannii (strain UCI 50), this protein is CD-NTase/cGAS isopeptidase.